The following is a 420-amino-acid chain: MEIDTLLGAFRDFEKKGEKESCPILDQFLSHVAKTGETMIQWSQFKSYFLFKLEKVMDDFKASCPEQRGPANPNVEYIPFEEMKQRILKIVNGYNGIPFTIQRLCELLTEPKRNYAGTDKFLRGVEKNVMVVSCVYPTSEKKGSSCVNRMNGVMFPGNTSAFPDRNVNGPGTPRPLNRPKHSLSSNVATNGLPDSTESKEQASEQSERTVNESSASEAESHSGAVKSKHRDDEDATHAETHEAKRLKFDKEEEEEEDDEEEDEDGDEIKKELDEPHSPCTSVAESSSDVPQSSTDVTAEVKDEDQEPSSTQSEVVENGVDRSTSEDSPDPSHKATGSESDPKEQQAEEEEEEESAEAQETEETNDPVSSSSNNSSDEGVSSAETPSASPSSSTELPAEGSVTAEITSDNSETADDNMEQD.

The disordered stretch occupies residues 157–420; the sequence is GNTSAFPDRN…ETADDNMEQD (264 aa). Positions 182–195 are enriched in polar residues; it reads SLSSNVATNGLPDS. A compositionally biased stretch (basic and acidic residues) spans 196–210; that stretch reads TESKEQASEQSERTV. The segment covering 212 to 224 has biased composition (low complexity); that stretch reads ESSASEAESHSGA. Residues 229–250 show a composition bias toward basic and acidic residues; it reads HRDDEDATHAETHEAKRLKFDK. Residues 251 to 266 show a composition bias toward acidic residues; that stretch reads EEEEEEDDEEEDEDGD. Residues 267–276 are compositionally biased toward basic and acidic residues; the sequence is EIKKELDEPH. Over residues 278–296 the composition is skewed to polar residues; it reads PCTSVAESSSDVPQSSTDV. Basic and acidic residues predominate over residues 318-332; the sequence is GVDRSTSEDSPDPSH. Positions 346–364 are enriched in acidic residues; the sequence is AEEEEEEESAEAQETEETN. Positions 368–394 are enriched in low complexity; the sequence is SSSSNNSSDEGVSSAETPSASPSSSTE. The segment covering 411–420 has biased composition (acidic residues); it reads ETADDNMEQD.

It belongs to the PPP4R2 family. As to quaternary structure, serine/threonine-protein phosphatase 4 (PP4) occurs in different assemblies of the catalytic and one or more regulatory subunits.

In terms of biological role, regulatory subunit of serine/threonine-protein phosphatase 4 (PP4C). This chain is Serine/threonine-protein phosphatase 4 regulatory subunit 2-A (ppp4r2a), found in Danio rerio (Zebrafish).